Reading from the N-terminus, the 35-residue chain is MSDIN-like toxin proprotein 8 (35 aa).

Positions 1 to 10 (MSDINATRLP) are excised as a propeptide. Residues 11–18 (FVFVASPP) constitute a cross-link (cyclopeptide (Phe-Pro)). Positions 19-35 (CVGDDIAMVLTRGENLC) are excised as a propeptide.

The protein belongs to the MSDIN fungal toxin family. Processed by the macrocyclase-peptidase enzyme POPB to yield a toxic cyclic octapeptide. POPB first removes 10 residues from the N-terminus. Conformational trapping of the remaining peptide forces the enzyme to release this intermediate rather than proceed to macrocyclization. The enzyme rebinds the remaining peptide in a different conformation and catalyzes macrocyclization of the N-terminal 8 residues. As to expression, expressed in basidiocarps.

In terms of biological role, probable toxin that belongs to the MSDIN-like toxin family responsible for a large number of food poisoning cases and deaths. The protein is MSDIN-like toxin proprotein 8 of Amanita exitialis (Guangzhou destroying angel).